Here is a 343-residue protein sequence, read N- to C-terminus: Cytosolic Fe-S cluster assembly factor CFD1 (343 aa).

15–22 is an ATP binding site; the sequence is GKGGVGKS. Polar residues-rich tracts occupy residues 80-91 and 99-110; these read PSSDGLNGSQRA and ESSSSTVETAPQ. Residues 80-110 are disordered; sequence PSSDGLNGSQRANKPDDSNESSSSTVETAPQ. Residues Cys-241 and Cys-244 each coordinate [4Fe-4S] cluster.

It belongs to the Mrp/NBP35 ATP-binding proteins family. NUBP2/CFD1 subfamily. Heterotetramer of 2 NBP35 and 2 CFD1 chains. The cofactor is [4Fe-4S] cluster.

It localises to the cytoplasm. Component of the cytosolic iron-sulfur (Fe/S) protein assembly (CIA) machinery. Required for maturation of extramitochondrial Fe-S proteins. The NBP35-CFD1 heterotetramer forms a Fe-S scaffold complex, mediating the de novo assembly of an Fe-S cluster and its transfer to target apoproteins. In Coccidioides immitis (strain RS) (Valley fever fungus), this protein is Cytosolic Fe-S cluster assembly factor CFD1.